The chain runs to 499 residues: Centrosomal protein of 57 kDa (499 aa).

Positions 1–16 are enriched in low complexity; sequence MAAASVSAASDSQFSS. The interval 1–41 is disordered; sequence MAAASVSAASDSQFSSVLAEPSRSNGNMVHHSSSPYVLYPP. Residues 22–35 show a composition bias toward polar residues; that stretch reads SRSNGNMVHHSSSP. A Phosphoserine modification is found at S53. Residues 58 to 239 are centrosome localization domain (CLD); that stretch reads TFAYPESNSR…RAAELQSGIE (182 aa). A coiled-coil region spans residues 63–242; sequence ESNSRAIFSA…ELQSGIEANR (180 aa). Disordered regions lie at residues 255–275 and 424–476; these read TSTR…GFRN and LEKQ…SRKN. Residues 278–490 are mediates interaction with microtubules; sequence GAQPHYRLCL…KDMQTLQNSL (213 aa). The stretch at 388–491 forms a coiled coil; that stretch reads PSEELKDNLE…DMQTLQNSLQ (104 aa). Residues 427–443 are compositionally biased toward basic and acidic residues; sequence QSTDKQKELKGNKKTLD. A compositionally biased stretch (low complexity) spans 448–458; the sequence is SSSRSSVITRT. Basic and acidic residues predominate over residues 460–474; that stretch reads SKKDFTKQRPGEKSR.

It belongs to the translokin family. In terms of assembly, homodimer and homooligomer. Interacts with FGF2 and RAP80. Does not interact with FGF1 or FGF2 isoform 24 kDa. Interacts with microtubules. Ubiquitous (at protein level).

It is found in the nucleus. It localises to the cytoplasm. The protein localises to the cytoskeleton. The protein resides in the microtubule organizing center. Its subcellular location is the centrosome. Its function is as follows. Centrosomal protein which may be required for microtubule attachment to centrosomes. May act by forming ring-like structures around microtubules. Mediates nuclear translocation and mitogenic activity of the internalized growth factor FGF2. In Rattus norvegicus (Rat), this protein is Centrosomal protein of 57 kDa (Cep57).